A 222-amino-acid polypeptide reads, in one-letter code: Putative N-acetylmannosamine-6-phosphate 2-epimerase (222 aa).

Belongs to the NanE family.

It carries out the reaction an N-acyl-D-glucosamine 6-phosphate = an N-acyl-D-mannosamine 6-phosphate. It functions in the pathway amino-sugar metabolism; N-acetylneuraminate degradation; D-fructose 6-phosphate from N-acetylneuraminate: step 3/5. Its function is as follows. Converts N-acetylmannosamine-6-phosphate (ManNAc-6-P) to N-acetylglucosamine-6-phosphate (GlcNAc-6-P). The protein is Putative N-acetylmannosamine-6-phosphate 2-epimerase of Staphylococcus aureus (strain MSSA476).